A 203-amino-acid chain; its full sequence is Small ribosomal subunit protein uS4 (203 aa).

The region spanning 93 to 153 (RRLDNVVYRL…EKSKNLQQVK (61 aa)) is the S4 RNA-binding domain.

It belongs to the universal ribosomal protein uS4 family. Part of the 30S ribosomal subunit. Contacts protein S5. The interaction surface between S4 and S5 is involved in control of translational fidelity.

In terms of biological role, one of the primary rRNA binding proteins, it binds directly to 16S rRNA where it nucleates assembly of the body of the 30S subunit. Functionally, with S5 and S12 plays an important role in translational accuracy. In Lactobacillus delbrueckii subsp. bulgaricus (strain ATCC 11842 / DSM 20081 / BCRC 10696 / JCM 1002 / NBRC 13953 / NCIMB 11778 / NCTC 12712 / WDCM 00102 / Lb 14), this protein is Small ribosomal subunit protein uS4.